A 138-amino-acid chain; its full sequence is Translation initiation factor 2 subunit beta (138 aa).

This sequence belongs to the eIF-2-beta/eIF-5 family. In terms of assembly, heterotrimer composed of an alpha, a beta and a gamma chain.

In terms of biological role, eIF-2 functions in the early steps of protein synthesis by forming a ternary complex with GTP and initiator tRNA. The polypeptide is Translation initiation factor 2 subunit beta (Methanococcus maripaludis (strain DSM 14266 / JCM 13030 / NBRC 101832 / S2 / LL)).